We begin with the raw amino-acid sequence, 107 residues long: C-X-C motif chemokine 2 (107 aa).

Residues 1–34 form the signal peptide; it reads MARATLSAAPSNPRLLRVALLLLLLVAASRRAAG. 2 disulfide bridges follow: Cys-43-Cys-69 and Cys-45-Cys-85.

The protein belongs to the intercrine alpha (chemokine CxC) family. In terms of processing, the N-terminal processed form GRO-beta(5-73) is produced by proteolytic cleavage after secretion from bone marrow stromal cells.

The protein localises to the secreted. Produced by activated monocytes and neutrophils and expressed at sites of inflammation. Hematoregulatory chemokine, which, in vitro, suppresses hematopoietic progenitor cell proliferation. GRO-beta(5-73) shows a highly enhanced hematopoietic activity. The chain is C-X-C motif chemokine 2 (CXCL2) from Homo sapiens (Human).